The sequence spans 200 residues: Segregation and condensation protein B (200 aa).

The protein belongs to the ScpB family. Homodimer. Homodimerization may be required to stabilize the binding of ScpA to the Smc head domains. Component of a cohesin-like complex composed of ScpA, ScpB and the Smc homodimer, in which ScpA and ScpB bind to the head domain of Smc. The presence of the three proteins is required for the association of the complex with DNA.

Its subcellular location is the cytoplasm. Participates in chromosomal partition during cell division. May act via the formation of a condensin-like complex containing Smc and ScpA that pull DNA away from mid-cell into both cell halves. The polypeptide is Segregation and condensation protein B (Lactobacillus delbrueckii subsp. bulgaricus (strain ATCC 11842 / DSM 20081 / BCRC 10696 / JCM 1002 / NBRC 13953 / NCIMB 11778 / NCTC 12712 / WDCM 00102 / Lb 14)).